Consider the following 270-residue polypeptide: UPF0246 protein Psyc_0554 (270 aa).

It belongs to the UPF0246 family.

This chain is UPF0246 protein Psyc_0554, found in Psychrobacter arcticus (strain DSM 17307 / VKM B-2377 / 273-4).